The sequence spans 275 residues: 4-hydroxy-3-methylbut-2-enyl diphosphate reductase (275 aa).

Cys-12 serves as a coordination point for [4Fe-4S] cluster. (2E)-4-hydroxy-3-methylbut-2-enyl diphosphate-binding residues include His-40 and His-70. The dimethylallyl diphosphate site is built by His-40 and His-70. Positions 40 and 70 each coordinate isopentenyl diphosphate. A [4Fe-4S] cluster-binding site is contributed by Cys-92. (2E)-4-hydroxy-3-methylbut-2-enyl diphosphate is bound at residue His-119. His-119 contributes to the dimethylallyl diphosphate binding site. An isopentenyl diphosphate-binding site is contributed by His-119. Glu-121 acts as the Proton donor in catalysis. Thr-151 provides a ligand contact to (2E)-4-hydroxy-3-methylbut-2-enyl diphosphate. Cys-181 contributes to the [4Fe-4S] cluster binding site. (2E)-4-hydroxy-3-methylbut-2-enyl diphosphate contacts are provided by Ser-209, Ser-210, Asn-211, and Ser-251. Dimethylallyl diphosphate-binding residues include Ser-209, Ser-210, Asn-211, and Ser-251. Isopentenyl diphosphate contacts are provided by Ser-209, Ser-210, Asn-211, and Ser-251.

It belongs to the IspH family. Requires [4Fe-4S] cluster as cofactor.

The catalysed reaction is isopentenyl diphosphate + 2 oxidized [2Fe-2S]-[ferredoxin] + H2O = (2E)-4-hydroxy-3-methylbut-2-enyl diphosphate + 2 reduced [2Fe-2S]-[ferredoxin] + 2 H(+). It catalyses the reaction dimethylallyl diphosphate + 2 oxidized [2Fe-2S]-[ferredoxin] + H2O = (2E)-4-hydroxy-3-methylbut-2-enyl diphosphate + 2 reduced [2Fe-2S]-[ferredoxin] + 2 H(+). It participates in isoprenoid biosynthesis; dimethylallyl diphosphate biosynthesis; dimethylallyl diphosphate from (2E)-4-hydroxy-3-methylbutenyl diphosphate: step 1/1. It functions in the pathway isoprenoid biosynthesis; isopentenyl diphosphate biosynthesis via DXP pathway; isopentenyl diphosphate from 1-deoxy-D-xylulose 5-phosphate: step 6/6. Its function is as follows. Catalyzes the conversion of 1-hydroxy-2-methyl-2-(E)-butenyl 4-diphosphate (HMBPP) into a mixture of isopentenyl diphosphate (IPP) and dimethylallyl diphosphate (DMAPP). Acts in the terminal step of the DOXP/MEP pathway for isoprenoid precursor biosynthesis. This Thermotoga sp. (strain RQ2) protein is 4-hydroxy-3-methylbut-2-enyl diphosphate reductase.